We begin with the raw amino-acid sequence, 461 residues long: Serine/threonine-protein kinase VHS1 (461 aa).

Residues 12-337 (YLITSQIGEG…KEVSSITSFT (326 aa)) form the Protein kinase domain. Residues 18–26 (IGEGAYGLV) and Lys41 each bind ATP. Asp185 (proton acceptor) is an active-site residue. The tract at residues 384-433 (LSYTSSSEEEDGIKEGIDDDNGSRSGSFGTLDTDTGLHSSFTSTSCESDN) is disordered. Residues 390–403 (SEEEDGIKEGIDDD) are compositionally biased toward acidic residues. The segment covering 406-433 (SRSGSFGTLDTDTGLHSSFTSTSCESDN) has biased composition (polar residues).

Belongs to the protein kinase superfamily. Ser/Thr protein kinase family.

Its subcellular location is the cytoplasm. The catalysed reaction is L-seryl-[protein] + ATP = O-phospho-L-seryl-[protein] + ADP + H(+). The enzyme catalyses L-threonyl-[protein] + ATP = O-phospho-L-threonyl-[protein] + ADP + H(+). Its function is as follows. Probable serine/threonine protein kinase involved in the G1-S transition. The polypeptide is Serine/threonine-protein kinase VHS1 (VHS1) (Saccharomyces cerevisiae (strain ATCC 204508 / S288c) (Baker's yeast)).